The sequence spans 100 residues: uncharacterized protein (100 aa).

In terms of domain architecture, HTH arsR-type spans 1-100; the sequence is MEPIEVFKAL…KLADFLKTEI (100 aa). A DNA-binding region (H-T-H motif) is located at residues 44–67; sequence VSQITDKLKMTQSTASQYLTILLR.

This is an uncharacterized protein from Bacillus subtilis (strain 168).